A 333-amino-acid polypeptide reads, in one-letter code: Fructose-1,6-bisphosphatase class 1 1 (333 aa).

Glu-81, Asp-100, Leu-102, and Asp-103 together coordinate Mg(2+). Residues 103–106 (DGSS) and Asn-191 contribute to the substrate site. Mg(2+) is bound at residue Glu-263.

Belongs to the FBPase class 1 family. In terms of assembly, homotetramer. The cofactor is Mg(2+).

The protein resides in the cytoplasm. The catalysed reaction is beta-D-fructose 1,6-bisphosphate + H2O = beta-D-fructose 6-phosphate + phosphate. The protein operates within carbohydrate biosynthesis; Calvin cycle. This chain is Fructose-1,6-bisphosphatase class 1 1, found in Cereibacter sphaeroides (strain ATCC 17029 / ATH 2.4.9) (Rhodobacter sphaeroides).